A 330-amino-acid polypeptide reads, in one-letter code: MTAETIQTDRIPPHLRPAMQALAEAGARLAAIIRRGGDLAQPVGTNADGDGQKALDVIADDLFCQTLAGAGVRWLASEEQEQAVALDPEGTLAVAIDPLDGSSNIDTNVSIGTIFSIYPAEATAEASFLRPARQQIGAGYIIYGPRCAMMVTFGDGVQHYALDPEDDAFRLVATRRQMPDCALEFAINASNYRHWPQPIRAYIDDCLAGSDGPREQNFNMRWIASLVAETHRILVRGGVFLYPSDARKGYEHGRLRMLYECAPIAFLIEQAGGGATDGRTAILEQGAPTLHQRTPFVFGSAEKVARIAAYHELPETEVSALFGHRGLFRA.

Mg(2+)-binding residues include E78, D97, L99, and D100. Residues 100–103 and N188 contribute to the substrate site; that span reads DGSS. A Mg(2+)-binding site is contributed by E260.

Belongs to the FBPase class 1 family. In terms of assembly, homotetramer. It depends on Mg(2+) as a cofactor.

The protein resides in the cytoplasm. It catalyses the reaction beta-D-fructose 1,6-bisphosphate + H2O = beta-D-fructose 6-phosphate + phosphate. Its pathway is carbohydrate biosynthesis; gluconeogenesis. The protein is Fructose-1,6-bisphosphatase class 1 of Paracoccus denitrificans (strain Pd 1222).